We begin with the raw amino-acid sequence, 167 residues long: Ubiquitin-like-conjugating enzyme ATG10 (167 aa).

Cys-133 acts as the Glycyl thioester intermediate in catalysis.

The protein belongs to the ATG10 family. In terms of assembly, forms homooligomers. Interacts with ATG7 and ATG12.

It localises to the preautophagosomal structure membrane. E2-like enzyme required for the cytoplasm to vacuole transport (Cvt), autophagy and nucleophagy. Acts as an E2-like enzyme that catalyzes the conjugation of ATG12 to ATG5. ATG12 conjugation to ATG5 is required for proper localization of ATG8 to the preautophagosomal structure (PAS). Likely serves as an ATG5-recognition molecule. This chain is Ubiquitin-like-conjugating enzyme ATG10 (ATG10), found in Saccharomyces cerevisiae (strain ATCC 204508 / S288c) (Baker's yeast).